The primary structure comprises 316 residues: Putative metal-binding protein TP_0034 (316 aa).

Residues 1–19 form the signal peptide; it reads MQRCSVVAALAGVVFLAQA. A divalent metal cation-binding residues include H68, H146, and H210.

Belongs to the bacterial solute-binding protein 9 family.

It is found in the periplasm. In terms of biological role, part of an ATP-binding cassette (ABC) transport system involved in metal import. Binds a metal with high affinity and specificity and delivers it to the membrane permease for translocation into the cytoplasm. The chain is Putative metal-binding protein TP_0034 from Treponema pallidum (strain Nichols).